We begin with the raw amino-acid sequence, 481 residues long: FBD-associated F-box protein At5g44490 (481 aa).

Positions 17 to 64 (DLMSKLTDALISQVLFYLPTKEAVSTSVLSSRWKSVWLLIPDLDLNSS) constitute an F-box domain. The 54-residue stretch at 370–423 (EKSVSFSSVPQCLLSSLEFVEIKISRFGIISLGIGIARFFVENSVVLKKLVVHS) folds into the FBD domain.

This Arabidopsis thaliana (Mouse-ear cress) protein is FBD-associated F-box protein At5g44490.